The following is a 159-amino-acid chain: Major latex protein 146 (159 aa).

The protein belongs to the MLP family. Laticifer.

It is found in the vacuole. The protein localises to the cytoplasmic vesicle. Not known; MLPs constitute up to 50% of the soluble latex protein. The chain is Major latex protein 146 (MLP146) from Papaver somniferum (Opium poppy).